Reading from the N-terminus, the 524-residue chain is GMP synthase [glutamine-hydrolyzing] (524 aa).

A Glutamine amidotransferase type-1 domain is found at 5–195 (KVIVIDFGGQ…VRGVCGCAGT (191 aa)). Cys82 (nucleophile) is an active-site residue. Active-site residues include His169 and Glu171. In terms of domain architecture, GMPS ATP-PPase spans 196–389 (WKMDSFVKNT…LGLPDYLVFR (194 aa)). An ATP-binding site is contributed by 223-229 (SGGVDSS).

Homodimer.

It carries out the reaction XMP + L-glutamine + ATP + H2O = GMP + L-glutamate + AMP + diphosphate + 2 H(+). It functions in the pathway purine metabolism; GMP biosynthesis; GMP from XMP (L-Gln route): step 1/1. Its function is as follows. Catalyzes the synthesis of GMP from XMP. This Agathobacter rectalis (strain ATCC 33656 / DSM 3377 / JCM 17463 / KCTC 5835 / VPI 0990) (Eubacterium rectale) protein is GMP synthase [glutamine-hydrolyzing].